Reading from the N-terminus, the 580-residue chain is PTS system fructose-specific EIIB'BC component (580 aa).

2 PTS EIIB type-2 domains span residues 3–100 (MKIA…QAAE) and 124–221 (KKIV…NAFA). Active-site phosphocysteine intermediate; for EIIB activity residues include cysteine 11 and cysteine 132. A phosphocysteine; by EIIA mark is found at cysteine 11 and cysteine 132. The 336-residue stretch at 244-579 (VYKHLMTGVS…KKSAQAKAVA (336 aa)) folds into the PTS EIIC type-2 domain. 9 helical membrane passes run 254-274 (HMLP…VFGI), 292-312 (GGSA…FSIA), 322-342 (IGGM…VAGF), 367-387 (ILII…YVVG), 408-428 (NAIL…GGPV), 448-468 (MAAI…ATFI), 480-500 (AGKA…IPFA), 507-527 (VIPA…LFGA), and 537-557 (FVLL…AIAV).

The protein localises to the cell inner membrane. It catalyses the reaction D-fructose(out) + N(pros)-phospho-L-histidyl-[protein] = D-fructose 1-phosphate(in) + L-histidyl-[protein]. In terms of biological role, the phosphoenolpyruvate-dependent sugar phosphotransferase system (sugar PTS), a major carbohydrate active transport system, catalyzes the phosphorylation of incoming sugar substrates concomitantly with their translocation across the cell membrane. The enzyme II FruAB PTS system is involved in fructose transport. The polypeptide is PTS system fructose-specific EIIB'BC component (Vibrio cholerae serotype O1 (strain ATCC 39315 / El Tor Inaba N16961)).